The sequence spans 1863 residues: Transient receptor potential cation channel subfamily M member 7 (1863 aa).

The residue at position 1 (methionine 1) is an N-acetylmethionine. Residues 1-850 (MSQKSWIEST…ITRKFYAFYH (850 aa)) are Cytoplasmic-facing. Serine 101 is modified (phosphoserine). The segment covering 544 to 555 (NRRSGRNTSSST) has biased composition (low complexity). Residues 544–574 (NRRSGRNTSSSTPQLRKSHETFGNRADKKEK) are disordered. Residues 560–573 (KSHETFGNRADKKE) show a composition bias toward basic and acidic residues. The helical transmembrane segment at 851–876 (APIVKFWFNTLAYLGFLMLYTFVVLV) threads the bilayer. The Extracellular segment spans residues 877–882 (KMEQLP). A helical transmembrane segment spans residues 883 to 904 (SVQEWIVIAYIFTYAIEKVREV). Residues 905 to 923 (FMSEAGKISQKIKVWFSDY) are Cytoplasmic-facing. Residues 924-943 (FNVSDTIAIISFFVGFGLRF) form a helical membrane-spanning segment. The Extracellular segment spans residues 944–956 (GAKWNYINAYDNH). The helical transmembrane segment at 957–980 (VFVAGRLIYCLNIIFWYVRLLDFL) threads the bilayer. Residues 981–999 (AVNQQAGPYVMMIGKMVAN) lie on the Cytoplasmic side of the membrane. The helical transmembrane segment at 1000–1023 (MFYIVVIMALVLLSFGVPRKAILY) threads the bilayer. The Extracellular portion of the chain corresponds to 1024-1025 (PH). The segment at residues 1026-1066 (EEPSWSLAKDIVFHPYWMIFGEVYAYEIDVCANDSTLPTIC) is an intramembrane region (pore-forming). Residues 1067 to 1069 (GPG) are Extracellular-facing. Residues 1070-1098 (TWLTPFLQAVYLFVQYIIMVNLLIAFFNN) traverse the membrane as a helical segment. The Cytoplasmic segment spans residues 1099–1863 (VYLQVKAISN…EATNSVRLML (765 aa)). Residues cysteine 1143, cysteine 1144, and cysteine 1146 are each lipidated (S-palmitoyl cysteine). Residue threonine 1163 is modified to Phosphothreonine. A phosphoserine mark is found at serine 1191, serine 1193, serine 1224, serine 1255, and serine 1258. Residues 1198–1250 (RVTFERVEQMSIQIKEVGDRVNYIKRSLQSLDSQIGHLQDLSALTVDTLKTLT) are a coiled coil. Threonine 1265 carries the phosphothreonine modification. Phosphoserine is present on residues serine 1300, serine 1357, serine 1360, serine 1385, serine 1386, serine 1389, serine 1394, serine 1395, and serine 1403. The segment at 1380 to 1418 (NQKLGSSPNSSPHMSSPPTKFSVSTPSQPSCKSHLESTT) is disordered. The segment covering 1385 to 1397 (SSPNSSPHMSSPP) has biased composition (low complexity). The segment covering 1398 to 1410 (TKFSVSTPSQPSC) has biased composition (polar residues). Threonine 1404 is modified (phosphothreonine). A phosphoserine mark is found at serine 1406 and serine 1445. Threonine 1454 is modified (phosphothreonine). A Phosphoserine modification is found at serine 1455. A phosphothreonine mark is found at threonine 1466 and threonine 1470. A phosphoserine mark is found at serine 1491, serine 1498, serine 1502, serine 1511, serine 1525, and serine 1531. The interval 1498–1539 (SRRASTEDSPEVDSKAALLPDWLRDRPSNREMPSEGGTLNGL) is disordered. Residues 1519-1530 (WLRDRPSNREMP) show a composition bias toward basic and acidic residues. At threonine 1535 the chain carries Phosphothreonine. Residue serine 1541 is modified to Phosphoserine. Threonine 1549 carries the post-translational modification Phosphothreonine. A phosphoserine mark is found at serine 1565 and serine 1567. Threonine 1581 is modified (phosphothreonine). An Alpha-type protein kinase domain is found at 1592–1822 (ILNNSMSSWS…CCRKLKLPDL (231 aa)). A phosphoserine mark is found at serine 1596 and serine 1613. ADP contacts are provided by glycine 1619, glycine 1620, leucine 1621, arginine 1622, and lysine 1646. The residue at position 1658 (serine 1658) is a Phosphoserine. Position 1683 is a phosphothreonine (threonine 1683). 3 residues coordinate ADP: glutamate 1718, glutamate 1719, and methionine 1721. Histidine 1751 lines the Zn(2+) pocket. Catalysis depends on aspartate 1765, which acts as the Proton acceptor. Aspartate 1775 is a binding site for ADP. A Phosphoserine modification is found at serine 1777. Histidine 1808, cysteine 1810, and cysteine 1814 together coordinate Zn(2+). Threonine 1828 bears the Phosphothreonine mark. Positions 1838 to 1863 (ESSDLNLQSGNSTKESEATNSVRLML) are disordered. A compositionally biased stretch (polar residues) spans 1841-1863 (DLNLQSGNSTKESEATNSVRLML). 3 positions are modified to phosphoserine: serine 1846, serine 1849, and serine 1858.

The protein in the C-terminal section; belongs to the protein kinase superfamily. Alpha-type protein kinase family. ALPK subfamily. In the N-terminal section; belongs to the transient receptor (TC 1.A.4) family. LTrpC subfamily. TRPM7 sub-subfamily. Homodimer. Homotetramer. Forms heteromers with TRPM6; heteromeric channels are functionally different from the homomeric channels. Interacts with PLCB1. Requires Zn(2+) as cofactor. Palmitoylated; palmitoylation at Cys-1143, Cys-1144 and Cys-1146 promotes TRPM7 trafficking from the Golgi to the surface membrane. In terms of processing, autophosphorylated; autophosphorylation regulates TRPM7 kinase activity towards its substrates. Post-translationally, the C-terminal kinase domain can be cleaved from the channel segment in a cell-type-specific fashion. TRPM7 is cleaved by caspase-8, dissociating the kinase from the ion-conducting pore. The cleaved kinase fragments (M7CKs) can translocate to the cell nucleus and binds chromatin-remodeling complex proteins in a Zn(2+)-dependent manner to ultimately phosphorylate specific Ser/Thr residues of histones. In terms of tissue distribution, found to be expressed in brain and skeletal muscle, with stronger signals in kidney, heart, liver and spleen.

It is found in the cell membrane. The protein resides in the cytoplasmic vesicle membrane. It localises to the nucleus. The enzyme catalyses L-seryl-[protein] + ATP = O-phospho-L-seryl-[protein] + ADP + H(+). It carries out the reaction L-threonyl-[protein] + ATP = O-phospho-L-threonyl-[protein] + ADP + H(+). The catalysed reaction is Mg(2+)(in) = Mg(2+)(out). It catalyses the reaction Ca(2+)(in) = Ca(2+)(out). The enzyme catalyses Zn(2+)(in) = Zn(2+)(out). Its activity is regulated as follows. Channel displays constitutive activity. Channel activity is negatively regulated by cytosolic Mg(2+), Mg-ATP and low intracellular pH. Resting free cytosolic Mg(2+) and Mg-ATP concentrations seem to be sufficient to block native TRPM7 channel activity. TRPM7 channel activity is highly dependent on membrane levels of phosphatidylinositol 4,5 bisphosphate (PIP2). PIP2 hydrolysis negatively regulates TRPM7 channel activity. TRPM7 kinase activity does not affect channel activity. The kinase activity is controlled through the autophosphorylation of a serine/threonine-rich region located N-terminal to the catalytic domain. In terms of biological role, bifunctional protein that combines an ion channel with an intrinsic kinase domain, enabling it to modulate cellular functions either by conducting ions through the pore or by phosphorylating downstream proteins via its kinase domain. The channel is highly permeable to divalent cations, specifically calcium (Ca2+), magnesium (Mg2+) and zinc (Zn2+) and mediates their influx. Controls a wide range of biological processes such as Ca2(+), Mg(2+) and Zn(2+) homeostasis, vesicular Zn(2+) release channel and intracellular Ca(2+) signaling, embryonic development, immune responses, cell motility, proliferation and differentiation. The C-terminal alpha-kinase domain autophosphorylates cytoplasmic residues of TRPM7. TRPM7 phosphorylates SMAD2, suggesting that TRPM7 kinase may play a role in activating SMAD signaling pathways. In vitro, TRPM7 kinase phosphorylates ANXA1 (annexin A1), myosin II isoforms and a variety of proteins with diverse cellular functions. The cleaved channel exhibits substantially higher current and potentiates Fas receptor signaling. Its function is as follows. The C-terminal kinase domain can be cleaved from the channel segment in a cell-type-specific fashion. In immune cells, the TRPM7 kinase domain is clipped from the channel domain by caspases in response to Fas-receptor stimulation. The cleaved kinase fragments can translocate to the nucleus, and bind chromatin-remodeling complex proteins in a Zn(2+)-dependent manner to ultimately phosphorylate specific Ser/Thr residues of histones known to be functionally important for cell differentiation and embryonic development. This chain is Transient receptor potential cation channel subfamily M member 7 (Trpm7), found in Mus musculus (Mouse).